The following is a 341-amino-acid chain: Krueppel-like factor 17 (341 aa).

The segment at 214 to 252 (VTESNTQEEPFVREPPTPAPEGAESPSTSRGATRRQSPV) is disordered. Residues 238–252 (SPSTSRGATRRQSPV) are compositionally biased toward polar residues. 3 consecutive C2H2-type zinc fingers follow at residues 256 to 280 (YVCT…QRKH), 286 to 310 (FACD…KRIH), and 316 to 338 (HKCD…KRTH).

The protein belongs to the Sp1 C2H2-type zinc-finger protein family. Exclusively expressed in testis and ovary. Localized to step 3-8 spermatids in testis and growing oocytes in ovary.

It is found in the nucleus. Transcription repressor that binds to the promoter of target genes and prevents their expression. Acts as a negative regulator of epithelial-mesenchymal transition and metastasis in breast cancer. Specifically binds the 5'-CACCC-3' sequence in the promoter of ID1, a key metastasis regulator in breast cancer, and repress its expression. May be a germ cell-specific transcription factor that plays important roles in spermatid differentiation and oocyte development. This Mus musculus (Mouse) protein is Krueppel-like factor 17 (Klf17).